The sequence spans 147 residues: MSTYTPKAGDVTHSWHVIDATDVVLGRLAVQAANLLRGKHKPTYAPHIDGGDFVVIINAEKVAISGNKLQGKNVYHHSGFPGGLKSRTVGEVLDRTPDRLVEKAIVGMLPKTKLGRAMSSKLKVYAGPNHPHTAQQPVPFEIKQVAQ.

It belongs to the universal ribosomal protein uL13 family. In terms of assembly, part of the 50S ribosomal subunit.

In terms of biological role, this protein is one of the early assembly proteins of the 50S ribosomal subunit, although it is not seen to bind rRNA by itself. It is important during the early stages of 50S assembly. This Rhodococcus erythropolis (strain PR4 / NBRC 100887) protein is Large ribosomal subunit protein uL13.